The chain runs to 226 residues: Ribosomal RNA small subunit methyltransferase G (226 aa).

S-adenosyl-L-methionine-binding positions include Gly95, Leu100, 146–147 (VE), and Arg159.

Belongs to the methyltransferase superfamily. RNA methyltransferase RsmG family.

Its subcellular location is the cytoplasm. It carries out the reaction guanosine(527) in 16S rRNA + S-adenosyl-L-methionine = N(7)-methylguanosine(527) in 16S rRNA + S-adenosyl-L-homocysteine. Its function is as follows. Specifically methylates the N7 position of guanine in position 527 of 16S rRNA. This is Ribosomal RNA small subunit methyltransferase G from Acidovorax ebreus (strain TPSY) (Diaphorobacter sp. (strain TPSY)).